Reading from the N-terminus, the 25-residue chain is Caerin-1.4 (25 aa).

At L25 the chain carries Leucine amide.

This sequence belongs to the frog skin active peptide (FSAP) family. Caerin subfamily. As to expression, expressed by the skin parotoid and/or rostral glands.

It is found in the secreted. Functionally, antibacterial peptide, that adopts an alpha helical conformation which can disrupt bacterial membranes. Each caerin displays a different antimicrobial specificity. The protein is Caerin-1.4 of Ranoidea caerulea (Green tree frog).